A 443-amino-acid polypeptide reads, in one-letter code: MRSVSYVQRVALDFSGSLFPHAICLGDVDNDALNELVVGDTSGKLSVYKNDDSRPWLTCMCQGMLTCVGVGDVCNKGKNLVVAVSAEGWLHLFDLTPTKALDASGHHETLGEEQRPVFKQHIPANTKVMLISDIDGDGCYELVVGYTDRVVRAFRWEELAEGPEHLAGQLVSLKKWMLEGQVDSLSVTPGPLGVPELVVSQPGCAYAVLLCTWNKDTGSPPASEEATGDSRETPAARDVVLHQTSGRIHNKNVSTHLIGNIRQGHNPEGGNAGLFALCTLDGTLKLMQEADKLLWSVQVDHQLFALEKLDVTGNGLEEVVACAWDGQTYIIDHNRTVVRFQVDENIRAFCAGQYACKEGRNSPCLVYVTFNQKIYVYWEVQLERMESTNLLKLLEAEPEYHRLLQELRVDPEDLPAVCTLLHQTLYHPDQPLQCTPSSFQDPT.

An FG-GAP 1; atypical repeat occupies 19–48; it reads FPHAICLGDVDNDALNELVVGDTSGKLSVY. Ser-104 is modified (phosphoserine). The stretch at 125 to 154 is one FG-GAP 2; atypical repeat; that stretch reads NTKVMLISDIDGDGCYELVVGYTDRVVRAF. Position 219 is a phosphoserine (Ser-219).

As to quaternary structure, part of the KICSTOR complex composed of KPTN, ITFG2, KICS2 and SZT2. SZT2 probably serves as a link between the other three proteins in the KICSTOR complex and may mediate the direct interaction with the GATOR complex via GATOR1. The KICSTOR complex interacts directly with the GATOR1 complex and most probably indirectly with the GATOR2 complex in an amino acid-independent manner.

The protein resides in the lysosome membrane. As part of the KICSTOR complex functions in the amino acid-sensing branch of the TORC1 signaling pathway. Recruits, in an amino acid-independent manner, the GATOR1 complex to the lysosomal membranes and allows its interaction with GATOR2 and the RAG GTPases. Functions upstream of the RAG GTPases and is required to negatively regulate mTORC1 signaling in absence of amino acids. In absence of the KICSTOR complex mTORC1 is constitutively localized to the lysosome and activated. The KICSTOR complex is also probably involved in the regulation of mTORC1 by glucose. This chain is KICSTOR complex protein ITFG2, found in Mus musculus (Mouse).